Here is a 58-residue protein sequence, read N- to C-terminus: Protein SHMOOSE (58 aa).

Residues 27-58 are disordered; it reads FGATPNKSNNHAHYYNHPNPDFPNSPHPYHPR. Residues 35-45 are compositionally biased toward low complexity; it reads NNHAHYYNHPN. The span at 46 to 58 shows a compositional bias: pro residues; it reads PDFPNSPHPYHPR.

In terms of assembly, interacts with IMMT/mitofilin. As to expression, detected in cerebrospinal fluid (at protein level).

It localises to the mitochondrion. The protein localises to the nucleus. Its function is as follows. Increases neural cell metabolic activity and mitochondrial oxygen consumption rate. The sequence is that of Protein SHMOOSE from Homo sapiens (Human).